The chain runs to 326 residues: Malate dehydrogenase (326 aa).

12-18 (GAAGQIA) is a binding site for NAD(+). Residues R93 and R99 each coordinate substrate. Residues N106, Q113, and 130–132 (VGN) contribute to the NAD(+) site. N132 and R163 together coordinate substrate. The active-site Proton acceptor is the H188.

It belongs to the LDH/MDH superfamily. MDH type 2 family.

It carries out the reaction (S)-malate + NAD(+) = oxaloacetate + NADH + H(+). Catalyzes the reversible oxidation of malate to oxaloacetate. This chain is Malate dehydrogenase, found in Corynebacterium diphtheriae (strain ATCC 700971 / NCTC 13129 / Biotype gravis).